The following is a 141-amino-acid chain: Large ribosomal subunit protein uL11 (141 aa).

The protein belongs to the universal ribosomal protein uL11 family. As to quaternary structure, part of the ribosomal stalk of the 50S ribosomal subunit. Interacts with L10 and the large rRNA to form the base of the stalk. L10 forms an elongated spine to which L12 dimers bind in a sequential fashion forming a multimeric L10(L12)X complex. One or more lysine residues are methylated.

Forms part of the ribosomal stalk which helps the ribosome interact with GTP-bound translation factors. The protein is Large ribosomal subunit protein uL11 of Exiguobacterium sp. (strain ATCC BAA-1283 / AT1b).